A 152-amino-acid chain; its full sequence is Ribosomal RNA large subunit methyltransferase H (152 aa).

S-adenosyl-L-methionine is bound by residues Leu70, Gly102, and 120 to 125 (LSPMTF).

The protein belongs to the RNA methyltransferase RlmH family. As to quaternary structure, homodimer.

Its subcellular location is the cytoplasm. The catalysed reaction is pseudouridine(1915) in 23S rRNA + S-adenosyl-L-methionine = N(3)-methylpseudouridine(1915) in 23S rRNA + S-adenosyl-L-homocysteine + H(+). Functionally, specifically methylates the pseudouridine at position 1915 (m3Psi1915) in 23S rRNA. The sequence is that of Ribosomal RNA large subunit methyltransferase H from Pelobacter propionicus (strain DSM 2379 / NBRC 103807 / OttBd1).